The sequence spans 110 residues: Protein YcgL (110 aa).

A YcgL domain is found at 14–98; that stretch reads MFCVIYRSSK…PPEDLLKQHL (85 aa). Residues 88 to 110 are disordered; it reads PPPEDLLKQHLSSVGQNTSHADR. The span at 97–110 shows a compositional bias: polar residues; sequence HLSSVGQNTSHADR.

The polypeptide is Protein YcgL (Salmonella typhi).